Reading from the N-terminus, the 79-residue chain is Small ribosomal subunit protein bS16 (79 aa).

This sequence belongs to the bacterial ribosomal protein bS16 family.

The protein is Small ribosomal subunit protein bS16 of Buchnera aphidicola subsp. Acyrthosiphon pisum (strain 5A).